The primary structure comprises 88 residues: Small ribosomal subunit protein uS19 (88 aa).

It belongs to the universal ribosomal protein uS19 family.

Its function is as follows. Protein S19 forms a complex with S13 that binds strongly to the 16S ribosomal RNA. The polypeptide is Small ribosomal subunit protein uS19 (rpsS) (Chlamydia muridarum (strain MoPn / Nigg)).